A 67-amino-acid polypeptide reads, in one-letter code: Large ribosomal subunit protein uL29 (67 aa).

It belongs to the universal ribosomal protein uL29 family.

This is Large ribosomal subunit protein uL29 from Agathobacter rectalis (strain ATCC 33656 / DSM 3377 / JCM 17463 / KCTC 5835 / VPI 0990) (Eubacterium rectale).